Reading from the N-terminus, the 589-residue chain is Peptide transporter PTR_A (589 aa).

The interval 1–56 (MSETKPAANDLSNVPSASDSDKDNSLDKVHSLEKTGVHEDINKLPSSDLEQLEDDG) is disordered. Basic and acidic residues predominate over residues 19-42 (DSDKDNSLDKVHSLEKTGVHEDIN). 4 helical membrane passes run 74–95 (IPLS…YYGL), 124–144 (ALSY…AWIA), 153–173 (AICI…ITSI), and 180–200 (NTSL…TGGV). Asparagine 233 carries an N-linked (GlcNAc...) asparagine glycan. The next 8 membrane-spanning stretches (helical) occupy residues 236–256 (IQNV…SVIA), 266–286 (FWAG…VLLL), 345–365 (VYAC…GQMI), 388–408 (INAI…YPFI), 420–440 (IFWG…LQHF), 467–487 (IAIQ…ASIT), 502–522 (SFIM…GIAL), and 533–553 (WTYT…YIIF).

The protein belongs to the major facilitator superfamily. Proton-dependent oligopeptide transporter (POT/PTR) (TC 2.A.17) family.

It localises to the cell membrane. It carries out the reaction a dipeptide(out) + H(+)(out) = a dipeptide(in) + H(+)(in). The catalysed reaction is an L-amino acid tripeptide(out) + H(+)(out) = an L-amino acid tripeptide(in) + H(+)(in). Functionally, peptide transporter that exploits the inwardly directed proton motive force to facilitate the cellular uptake of di/tripeptides. The polypeptide is Peptide transporter PTR_A (Candidozyma auris (Yeast)).